The primary structure comprises 240 residues: UDP-2,3-diacylglucosamine hydrolase (240 aa).

5 residues coordinate Mn(2+): Asp8, His10, Asp41, Asn79, and His114. Residue 79–80 coordinates substrate; the sequence is NR. Substrate contacts are provided by Asp122, Ser160, Asn164, Lys167, and His195. His195 and His197 together coordinate Mn(2+).

It belongs to the LpxH family. Requires Mn(2+) as cofactor.

The protein resides in the cell inner membrane. The catalysed reaction is UDP-2-N,3-O-bis[(3R)-3-hydroxytetradecanoyl]-alpha-D-glucosamine + H2O = 2-N,3-O-bis[(3R)-3-hydroxytetradecanoyl]-alpha-D-glucosaminyl 1-phosphate + UMP + 2 H(+). It participates in glycolipid biosynthesis; lipid IV(A) biosynthesis; lipid IV(A) from (3R)-3-hydroxytetradecanoyl-[acyl-carrier-protein] and UDP-N-acetyl-alpha-D-glucosamine: step 4/6. Its function is as follows. Hydrolyzes the pyrophosphate bond of UDP-2,3-diacylglucosamine to yield 2,3-diacylglucosamine 1-phosphate (lipid X) and UMP by catalyzing the attack of water at the alpha-P atom. Involved in the biosynthesis of lipid A, a phosphorylated glycolipid that anchors the lipopolysaccharide to the outer membrane of the cell. In Salmonella paratyphi A (strain ATCC 9150 / SARB42), this protein is UDP-2,3-diacylglucosamine hydrolase.